Consider the following 144-residue polypeptide: Large ribosomal subunit protein uL16 (144 aa).

It belongs to the universal ribosomal protein uL16 family. In terms of assembly, part of the 50S ribosomal subunit.

Binds 23S rRNA and is also seen to make contacts with the A and possibly P site tRNAs. The polypeptide is Large ribosomal subunit protein uL16 (Listeria innocua serovar 6a (strain ATCC BAA-680 / CLIP 11262)).